The sequence spans 505 residues: Band 7 protein CG42540 (505 aa).

The tract at residues 1 to 164 (MPDSMMDMEH…IHRAEARRAD (164 aa)) is disordered. The span at 47-60 (SEERDRDRDRERDH) shows a compositional bias: basic and acidic residues. Low complexity-rich tracts occupy residues 82–104 (QLHQ…QQPQ) and 113–139 (QQQQ…QQLP). Residues 178–198 (LIFLSVALVIMTLPFSLFVCF) form a helical membrane-spanning segment. The interval 443–505 (GNTPPPLQLA…QQGQQISSAM (63 aa)) is disordered. A compositionally biased stretch (low complexity) spans 451 to 505 (LAPQQQMGQQQQPQYQQPQQQQQQYQPQQQQQQQQQQPQQQDQLYQQGQQISSAM).

It belongs to the band 7/mec-2 family.

It is found in the membrane. This chain is Band 7 protein CG42540, found in Drosophila melanogaster (Fruit fly).